The sequence spans 132 residues: Small ribosomal subunit protein uS11 (132 aa).

Positions 110–132 (IEDVTPVPSDSTRRKGGRRGRRL) are disordered. Basic residues predominate over residues 123–132 (RKGGRRGRRL).

This sequence belongs to the universal ribosomal protein uS11 family. In terms of assembly, component of the small ribosomal subunit. Mature ribosomes consist of a small (40S) and a large (60S) subunit. The 40S subunit contains about 32 different proteins and 1 molecule of RNA (18S). The 60S subunit contains 45 different proteins and 3 molecules of RNA (25S, 5.8S and 5S).

It is found in the cytoplasm. Functionally, component of the ribosome, a large ribonucleoprotein complex responsible for the synthesis of proteins in the cell. The small ribosomal subunit (SSU) binds messenger RNAs (mRNAs) and translates the encoded message by selecting cognate aminoacyl-transfer RNA (tRNA) molecules. The large subunit (LSU) contains the ribosomal catalytic site termed the peptidyl transferase center (PTC), which catalyzes the formation of peptide bonds, thereby polymerizing the amino acids delivered by tRNAs into a polypeptide chain. The nascent polypeptides leave the ribosome through a tunnel in the LSU and interact with protein factors that function in enzymatic processing, targeting, and the membrane insertion of nascent chains at the exit of the ribosomal tunnel. RPS14B is involved in nucleolar processing of pre-18S ribosomal RNA and ribosome assembly. The protein is Small ribosomal subunit protein uS11 (RPS14B) of Candida albicans (strain SC5314 / ATCC MYA-2876) (Yeast).